Consider the following 216-residue polypeptide: MQYLAIAVIVALAGLSAAAHKPAYYDDNMANQMVDQIVKSLTTKKELDPFKIEQTKVPIDKKIGLIHIKGSATIKNAVITGLSHISRRGDAKIDTDGGAFAATLKLGDKNIRIKTDLHLDLGKIIHPNLKFEGHIGDIDMKLKLKLDAEGKPSLDQFEIDEFEQVELFIHGLGPLDPLVDVIADSFVKYFNPQARKLVTDMLKPILVEEIKKLKLN.

A signal peptide spans 1–19; it reads MQYLAIAVIVALAGLSAAA.

Belongs to the mite group 7 allergen family.

The protein resides in the secreted. The polypeptide is Mite allergen Lep d 7 (Lepidoglyphus destructor (Storage mite)).